We begin with the raw amino-acid sequence, 457 residues long: MALWGGRFTQAADQRFKQFNDSLRFDYRLAEQDIVGSVAWSKALVTVGVLTAEEQAQLEEALNVLLEDVRARPQQILESDAEDIHSWVEGKLIDKVGQLGKKLHTGRSRNDQVATDLKLWCKDTVSELLTANRQLQSVLVETAQNNQDAVMPGYTHLQRAQPVTFAHWCLAYVEMLARDESRLQDALKRLDVSPLGCGALAGTAYEIDREQLAGWLGFASATRNSLDSVSDRDHVLELLSAAAIGMVHLSRFAEDLIFFNTGEAGFVELSDRVTSGSSLMPQKKNPDALELIRGKCGRVQGALTGMMMTLKGLPLAYNKDMQEDKEGLFDALDTWLDCLHMAALVLDGIQVKRPRCQEAAQQGYANATELADYLVAKGVPFREAHHIVGEAVVEAIRQGKPLEDLPLDELQKFSPVIGEDVYPILSLQSCLDKRAAKGGVSPQQVAQAIAFAQARLG.

This sequence belongs to the lyase 1 family. Argininosuccinate lyase subfamily.

The protein localises to the cytoplasm. It catalyses the reaction 2-(N(omega)-L-arginino)succinate = fumarate + L-arginine. The protein operates within amino-acid biosynthesis; L-arginine biosynthesis; L-arginine from L-ornithine and carbamoyl phosphate: step 3/3. This is Argininosuccinate lyase from Shigella dysenteriae serotype 1 (strain Sd197).